A 159-amino-acid polypeptide reads, in one-letter code: Ribosomal RNA large subunit methyltransferase H (159 aa).

Residues leucine 76, glycine 108, and 127–132 each bind S-adenosyl-L-methionine; that span reads FSKMTF.

Belongs to the RNA methyltransferase RlmH family. As to quaternary structure, homodimer.

It localises to the cytoplasm. It catalyses the reaction pseudouridine(1915) in 23S rRNA + S-adenosyl-L-methionine = N(3)-methylpseudouridine(1915) in 23S rRNA + S-adenosyl-L-homocysteine + H(+). In terms of biological role, specifically methylates the pseudouridine at position 1915 (m3Psi1915) in 23S rRNA. This Clostridium botulinum (strain Alaska E43 / Type E3) protein is Ribosomal RNA large subunit methyltransferase H.